Consider the following 87-residue polypeptide: Small ribosomal subunit protein uS17 (87 aa).

It belongs to the universal ribosomal protein uS17 family. In terms of assembly, part of the 30S ribosomal subunit.

Its function is as follows. One of the primary rRNA binding proteins, it binds specifically to the 5'-end of 16S ribosomal RNA. The sequence is that of Small ribosomal subunit protein uS17 from Endomicrobium trichonymphae.